Consider the following 164-residue polypeptide: Phosphopantetheine adenylyltransferase (164 aa).

Position 9 (Ser9) interacts with substrate. ATP contacts are provided by residues 9–10 (SF) and His17. The substrate site is built by Lys41, Leu74, and Arg88. ATP contacts are provided by residues 89–91 (GIR), Glu99, and 124–130 (YAEVSST).

It belongs to the bacterial CoaD family. As to quaternary structure, homohexamer. Requires Mg(2+) as cofactor.

The protein localises to the cytoplasm. It carries out the reaction (R)-4'-phosphopantetheine + ATP + H(+) = 3'-dephospho-CoA + diphosphate. It functions in the pathway cofactor biosynthesis; coenzyme A biosynthesis; CoA from (R)-pantothenate: step 4/5. Reversibly transfers an adenylyl group from ATP to 4'-phosphopantetheine, yielding dephospho-CoA (dPCoA) and pyrophosphate. This is Phosphopantetheine adenylyltransferase from Chromobacterium violaceum (strain ATCC 12472 / DSM 30191 / JCM 1249 / CCUG 213 / NBRC 12614 / NCIMB 9131 / NCTC 9757 / MK).